Consider the following 119-residue polypeptide: Microtubule nucleation factor SSNA1 (119 aa).

An N-acetylthreonine modification is found at threonine 2. Residues 2-32 are important for localization to the centrosome; sequence TQQGAALQNYNNELVKCIEELCQKREELCRQ. The stretch at 13–70 forms a coiled coil; the sequence is NELVKCIEELCQKREELCRQIQEEEDEKQRLQNEVRQLTEKLARVNENLARKIASRNE.

This sequence belongs to the SSNA1 family. Self-associates to form fibrils. Also forms dimers as well as monomers. Interacts with SPAST. As to expression, widely expressed.

Its subcellular location is the nucleus. The protein localises to the cytoplasm. It is found in the cytoskeleton. It localises to the microtubule organizing center. The protein resides in the centrosome. Its subcellular location is the centriole. The protein localises to the midbody. It is found in the flagellum basal body. It localises to the flagellum axoneme. The protein resides in the cell projection. Its subcellular location is the axon. Its function is as follows. Microtubule-binding protein which stabilizes dynamic microtubules by slowing growth and shrinkage at both plus and minus ends and serves as a sensor of microtubule damage, protecting microtubules from the microtubule-severing enzyme SPAST. Induces microtubule branching which is mediated by the formation of long SSNA1 fibrils which guide microtubule protofilaments to split apart from the mother microtubule and form daughter microtubules. Plays a role in axon outgrowth and branching. Required for cell division. The protein is Microtubule nucleation factor SSNA1 of Homo sapiens (Human).